Reading from the N-terminus, the 1381-residue chain is Non-structural polyprotein 1AB (1381 aa).

Residues Val-121 to Glu-160 adopt a coiled-coil conformation. Helical transmembrane passes span Phe-169–Val-189, Leu-249–Thr-269, Leu-279–Ala-299, Ala-324–Met-344, and Phe-365–Ile-385. Active-site charge relay system; for serine protease activity residues include His-477, Asp-506, and Ser-569. O-(5'-phospho-RNA)-tyrosine is present on Tyr-694. A coiled-coil region spans residues Thr-703–Asp-732. The interval Met-856–Glu-879 is disordered. Residues Ser-1122 to Val-1254 enclose the RdRp catalytic domain.

The protein belongs to the astroviridae polyprotein 1AB family. Monomer. Post-translationally, cleaved by the viral and host proteases. The protease is probably autocatalytically cleaved.

The protein resides in the host membrane. It catalyses the reaction RNA(n) + a ribonucleoside 5'-triphosphate = RNA(n+1) + diphosphate. In terms of biological role, responsible for the cleavage of the polyprotein into functional products. Its function is as follows. Protein covalently attached to the 5' extremity of the genomic and subgenomic RNAs. It may serve as a primer for the replicase. The protein is Non-structural polyprotein 1AB (ORF1) of Neovison vison (American mink).